The chain runs to 341 residues: UDP-3-O-(3-hydroxymyristoyl)glucosamine N-acyltransferase (341 aa).

Histidine 239 (proton acceptor) is an active-site residue.

The protein belongs to the transferase hexapeptide repeat family. LpxD subfamily. In terms of assembly, homotrimer.

It carries out the reaction a UDP-3-O-[(3R)-3-hydroxyacyl]-alpha-D-glucosamine + a (3R)-hydroxyacyl-[ACP] = a UDP-2-N,3-O-bis[(3R)-3-hydroxyacyl]-alpha-D-glucosamine + holo-[ACP] + H(+). The enzyme catalyses UDP-3-O-[(3R)-3-hydroxytetradecanoyl]-alpha-D-glucosamine + (3R)-hydroxytetradecanoyl-[ACP] = UDP-2-N,3-O-bis[(3R)-3-hydroxytetradecanoyl]-alpha-D-glucosamine + holo-[ACP] + H(+). It functions in the pathway glycolipid biosynthesis; lipid IV(A) biosynthesis; lipid IV(A) from (3R)-3-hydroxytetradecanoyl-[acyl-carrier-protein] and UDP-N-acetyl-alpha-D-glucosamine: step 3/6. Its function is as follows. Catalyzes the N-acylation of UDP-3-O-(hydroxytetradecanoyl)glucosamine using 3-hydroxytetradecanoyl-ACP as the acyl donor. Is involved in the biosynthesis of lipid A, a phosphorylated glycolipid that anchors the lipopolysaccharide to the outer membrane of the cell. This Salmonella paratyphi A (strain ATCC 9150 / SARB42) protein is UDP-3-O-(3-hydroxymyristoyl)glucosamine N-acyltransferase.